Here is a 445-residue protein sequence, read N- to C-terminus: Proline--tRNA ligase (445 aa).

The protein belongs to the class-II aminoacyl-tRNA synthetase family. ProS type 2 subfamily. Homodimer.

It localises to the cytoplasm. It carries out the reaction tRNA(Pro) + L-proline + ATP = L-prolyl-tRNA(Pro) + AMP + diphosphate. Its function is as follows. Catalyzes the attachment of proline to tRNA(Pro) in a two-step reaction: proline is first activated by ATP to form Pro-AMP and then transferred to the acceptor end of tRNA(Pro). This is Proline--tRNA ligase from Cereibacter sphaeroides (strain ATCC 17029 / ATH 2.4.9) (Rhodobacter sphaeroides).